The following is a 355-amino-acid chain: Homoserine O-succinyltransferase (355 aa).

The Acyl-thioester intermediate role is filled by cysteine 146. Positions 167 and 196 each coordinate substrate. Histidine 239 functions as the Proton acceptor in the catalytic mechanism. Glutamate 241 is a catalytic residue. Position 253 (arginine 253) interacts with substrate.

It belongs to the MetA family.

It is found in the cytoplasm. It carries out the reaction L-homoserine + succinyl-CoA = O-succinyl-L-homoserine + CoA. It functions in the pathway amino-acid biosynthesis; L-methionine biosynthesis via de novo pathway; O-succinyl-L-homoserine from L-homoserine: step 1/1. Transfers a succinyl group from succinyl-CoA to L-homoserine, forming succinyl-L-homoserine. This chain is Homoserine O-succinyltransferase, found in Methylococcus capsulatus (strain ATCC 33009 / NCIMB 11132 / Bath).